Reading from the N-terminus, the 431-residue chain is Nuclear envelope integral membrane protein 1 (431 aa).

The N-terminal stretch at 1–29 is a signal peptide; that stretch reads MAGEVEGEGCRVSWGVLVALLLLPLPSLC. Transmembrane regions (helical) follow at residues 151-171, 175-195, 206-226, 236-256, and 266-286; these read PRLFFVFLCGLLLFFYGDTLS, IFYYSTGITVGMLASMLILVF, PFVALLLGGWSVSIYVIQLVF, YWQYLLGYLGIVGFVSFAFCY, and SINILNWTLQLIGLLLMYISV. The interval 176–287 is a; required for its colocalization with lamins at the nuclear envelope; sequence FYYSTGITVG…GLLLMYISVQ (112 aa). A Nuclear localization signal motif is present at residues 317–325; sequence RKIKLKRGK. Residues 326-395 are b; required for interaction with ran; the sequence is PSPPRLLTEE…LTPNEVSVHE (70 aa). The tract at residues 326-431 is interaction with banf1-a and banf1-b; the sequence is PSPPRLLTEE…IEPVLYQDLR (106 aa). The segment at 368–375 is BAF-binding site (BBS); essential for interaction with banf1-a, banf1-b and ran; sequence SRIQSPKR.

This sequence belongs to the NEMP family. As to quaternary structure, homooligomer. Interacts with banf1-a and banf1-b. Interacts with ran-gtp. Phosphorylated.

Its subcellular location is the nucleus inner membrane. It localises to the nucleus envelope. Functionally, in concert with ran, required for proper eye development. May be involved in the expression of early eye marker genes. Contributes to nuclear envelope stiffness in germ cells. Required for fertility. Essential for normal erythropoiesis. Required for efficient nuclear envelope opening and enucleation during the late stages of erythroblast maturation. The sequence is that of Nuclear envelope integral membrane protein 1 (nemp1) from Xenopus tropicalis (Western clawed frog).